Consider the following 215-residue polypeptide: 3-isopropylmalate dehydratase small subunit (215 aa).

It belongs to the LeuD family. LeuD type 1 subfamily. As to quaternary structure, heterodimer of LeuC and LeuD.

It carries out the reaction (2R,3S)-3-isopropylmalate = (2S)-2-isopropylmalate. It participates in amino-acid biosynthesis; L-leucine biosynthesis; L-leucine from 3-methyl-2-oxobutanoate: step 2/4. Catalyzes the isomerization between 2-isopropylmalate and 3-isopropylmalate, via the formation of 2-isopropylmaleate. The sequence is that of 3-isopropylmalate dehydratase small subunit from Leptothrix cholodnii (strain ATCC 51168 / LMG 8142 / SP-6) (Leptothrix discophora (strain SP-6)).